The sequence spans 341 residues: 5-formaminoimidazole-4-carboxamide-1-(beta)-D-ribofuranosyl 5'-monophosphate synthetase (341 aa).

Positions 10 and 77 each coordinate 5-amino-1-(5-phospho-beta-D-ribosyl)imidazole-4-carboxamide. Positions 106–317 (DRSLKERLMR…YYGLLFDEPI (212 aa)) constitute an ATP-grasp domain. Residues 132–188 (DTLV…VLAY) and E210 each bind ATP. Residue N238 participates in 5-amino-1-(5-phospho-beta-D-ribosyl)imidazole-4-carboxamide binding. Mg(2+)-binding residues include E277 and E290.

Belongs to the phosphohexose mutase family. Mg(2+) is required as a cofactor. Requires Mn(2+) as cofactor.

It carries out the reaction 5-amino-1-(5-phospho-beta-D-ribosyl)imidazole-4-carboxamide + formate + ATP = 5-formamido-1-(5-phospho-D-ribosyl)imidazole-4-carboxamide + ADP + phosphate. The protein operates within purine metabolism; IMP biosynthesis via de novo pathway; 5-formamido-1-(5-phospho-D-ribosyl)imidazole-4-carboxamide from 5-amino-1-(5-phospho-D-ribosyl)imidazole-4-carboxamide (formate route): step 1/1. In terms of biological role, catalyzes the ATP- and formate-dependent formylation of 5-aminoimidazole-4-carboxamide-1-beta-d-ribofuranosyl 5'-monophosphate (AICAR) to 5-formaminoimidazole-4-carboxamide-1-beta-d-ribofuranosyl 5'-monophosphate (FAICAR) in the absence of folates. The sequence is that of 5-formaminoimidazole-4-carboxamide-1-(beta)-D-ribofuranosyl 5'-monophosphate synthetase from Cenarchaeum symbiosum (strain A).